The following is a 120-amino-acid chain: Large ribosomal subunit protein uL18 (120 aa).

It belongs to the universal ribosomal protein uL18 family. In terms of assembly, part of the 50S ribosomal subunit; part of the 5S rRNA/L5/L18/L25 subcomplex. Contacts the 5S and 23S rRNAs.

In terms of biological role, this is one of the proteins that bind and probably mediate the attachment of the 5S RNA into the large ribosomal subunit, where it forms part of the central protuberance. This is Large ribosomal subunit protein uL18 from Staphylococcus saprophyticus subsp. saprophyticus (strain ATCC 15305 / DSM 20229 / NCIMB 8711 / NCTC 7292 / S-41).